A 125-amino-acid chain; its full sequence is Small ribosomal subunit protein uS12m (125 aa).

The tract at residues 1-24 is disordered; the sequence is MPTSNQSIRHGREKKRRTDRTRAL. A compositionally biased stretch (basic residues) spans 9 to 19; it reads RHGREKKRRTD.

The protein belongs to the universal ribosomal protein uS12 family.

It is found in the mitochondrion. Functionally, protein S12 is involved in the translation initiation step. This chain is Small ribosomal subunit protein uS12m (RPS12), found in Pinus sylvestris (Scotch pine).